A 714-amino-acid chain; its full sequence is MEMASAFTLNVRLDNIAIITIDVPGEKMNTLKAEFASQVRAIIKQLRENKELRGVVFVSAKPDNFIAGADINMIGNCKTAQEAEVLARQGQQLMAEIHALPIPVIAAIHGACLGGGLELALACHGRVCTDDPKTVLGLPEVQLGLLPGSGGTQRLPRLIGVSTALEMILTGKQLRAKQAVKLGLVDDVVPHSILLEAAVELAKQDRPSSRPLPVRERILAGPLGRALLFKMVGKKTEHKTQGNYPATERILEVVETGLAQGTSSGYDAEARAFGELAMTPQSQALRNIFFASTEVKKDPGSDAPPAPLNSVGILGGGLMGGGIAYVTACKAGLPVRIKDINPQGINHALKYSWDQLEGKVRRRHLKASERDKQLALISGTTDYCGFAHRDLIIEAVFENLELKQQMVAEVEQNCATHTIFASNTSSLPIGDIAAHAARPEQVIGLHFFSPVEKMPLVEIIPHASTSAQTIATTVKLAKKQGKTPIVVRDKAGFYVNRILAPYINEAIRMLTEGERIEHIDTALVKFGFPVGPIQLLDEVGIDTGTKIMPVLEAAYGERFSAPANVVSSILNDDRKGRKNGRGFYLYGQKGRKSKKQVDPAIYPLIGAQGQGRLSAPQVAERCVMLMLNEAVCCLDEQVIRSVRDGDIGAVFGIGFPPFLGGPFRYIDSLGAGEVVAIMQRLATQYGSRFTPCNRFVEMSERGESFWKTTATDLQ.

The enoyl-CoA hydratase stretch occupies residues 1-190 (MEMASAFTLN…KLGLVDDVVP (190 aa)). The interval 306 to 714 (APLNSVGILG…FWKTTATDLQ (409 aa)) is 3-hydroxyacyl-CoA dehydrogenase.

It in the N-terminal section; belongs to the enoyl-CoA hydratase/isomerase family. This sequence in the central section; belongs to the 3-hydroxyacyl-CoA dehydrogenase family. Heterotetramer of two alpha chains (FadJ) and two beta chains (FadI).

Its subcellular location is the cytoplasm. It carries out the reaction a (3S)-3-hydroxyacyl-CoA = a (2E)-enoyl-CoA + H2O. The catalysed reaction is a 4-saturated-(3S)-3-hydroxyacyl-CoA = a (3E)-enoyl-CoA + H2O. It catalyses the reaction a (3S)-3-hydroxyacyl-CoA + NAD(+) = a 3-oxoacyl-CoA + NADH + H(+). The enzyme catalyses (3S)-3-hydroxybutanoyl-CoA = (3R)-3-hydroxybutanoyl-CoA. It participates in lipid metabolism; fatty acid beta-oxidation. Functionally, catalyzes the formation of a hydroxyacyl-CoA by addition of water on enoyl-CoA. Also exhibits 3-hydroxyacyl-CoA epimerase and 3-hydroxyacyl-CoA dehydrogenase activities. This Escherichia coli O6:K15:H31 (strain 536 / UPEC) protein is Fatty acid oxidation complex subunit alpha.